Reading from the N-terminus, the 608-residue chain is Phosphogluconate dehydratase (608 aa).

Residues Cys154 and Cys221 each contribute to the [4Fe-4S] cluster site.

It belongs to the IlvD/Edd family. [4Fe-4S] cluster serves as cofactor.

The catalysed reaction is 6-phospho-D-gluconate = 2-dehydro-3-deoxy-6-phospho-D-gluconate + H2O. It functions in the pathway carbohydrate metabolism; Entner-Doudoroff pathway. Catalyzes the dehydration of 6-phospho-D-gluconate to 2-dehydro-3-deoxy-6-phospho-D-gluconate. The protein is Phosphogluconate dehydratase of Pseudomonas aeruginosa (strain ATCC 15692 / DSM 22644 / CIP 104116 / JCM 14847 / LMG 12228 / 1C / PRS 101 / PAO1).